A 198-amino-acid polypeptide reads, in one-letter code: Large ribosomal subunit protein uL23c (198 aa).

The N-terminal 76 residues, methionine 1–glutamine 76, are a transit peptide targeting the chloroplast.

This sequence belongs to the universal ribosomal protein uL23 family. Component of the chloroplast large ribosomal subunit (LSU). Mature 70S chloroplast ribosomes of higher plants consist of a small (30S) and a large (50S) subunit. The 30S small subunit contains 1 molecule of ribosomal RNA (16S rRNA) and 24 different proteins. The 50S large subunit contains 3 rRNA molecules (23S, 5S and 4.5S rRNA) and 33 different proteins.

It is found in the plastid. The protein resides in the chloroplast. Component of the chloroplast ribosome (chloro-ribosome), a dedicated translation machinery responsible for the synthesis of chloroplast genome-encoded proteins, including proteins of the transcription and translation machinery and components of the photosynthetic apparatus. This is Large ribosomal subunit protein uL23c (RPL23) from Spinacia oleracea (Spinach).